Consider the following 292-residue polypeptide: Retinal homeobox protein Rx3 (292 aa).

A disordered region spans residues Met-1–Ser-27. The short motif at His-32–Gly-39 is the Octapeptide motif element. Disordered stretches follow at residues Gly-53–Lys-72 and Ser-85–Arg-107. Basic and acidic residues-rich tracts occupy residues Thr-57–Lys-72 and Asp-92–Pro-102. Positions His-106–Glu-165 form a DNA-binding region, homeobox. An OAR motif is present at residues Thr-272–Ile-285. Residues Arg-278–Lys-282 carry the Nuclear localization signal motif.

Belongs to the paired homeobox family. Bicoid subfamily.

The protein resides in the nucleus. Functionally, plays a critical role in eye formation by regulating the initial specification of retinal cells and/or their subsequent proliferation. This is Retinal homeobox protein Rx3 (rx3) from Danio rerio (Zebrafish).